We begin with the raw amino-acid sequence, 282 residues long: tRNA (guanine-N(7)-)-methyltransferase (282 aa).

Residues 1-36 (MAGPPNKKQKREDYRTARENGEESKELPKKKFYRQR) form a disordered region. The span at 10 to 29 (KREDYRTARENGEESKELPK) shows a compositional bias: basic and acidic residues. S-adenosyl-L-methionine contacts are provided by residues Gly100, 123-124 (EI), 158-159 (NT), and Cys178. Residue Asp181 is part of the active site. Position 256–258 (256–258 (TEE)) interacts with S-adenosyl-L-methionine.

The protein belongs to the class I-like SAM-binding methyltransferase superfamily. TrmB family. As to quaternary structure, forms a complex with trm82.

Its subcellular location is the nucleus. The enzyme catalyses guanosine(46) in tRNA + S-adenosyl-L-methionine = N(7)-methylguanosine(46) in tRNA + S-adenosyl-L-homocysteine. It functions in the pathway tRNA modification; N(7)-methylguanine-tRNA biosynthesis. In terms of biological role, catalyzes the formation of N(7)-methylguanine at position 46 (m7G46) in tRNA. The chain is tRNA (guanine-N(7)-)-methyltransferase (trm8) from Botryotinia fuckeliana (strain B05.10) (Noble rot fungus).